A 261-amino-acid chain; its full sequence is Short-chain dehydrogenase/reductase ARMGADRAFT_1018421 (261 aa).

I21, D68, N95, K128, Y161, K165, V194, and T196 together coordinate NADP(+). Y161 functions as the Proton acceptor in the catalytic mechanism. The active-site Lowers pKa of active site Tyr is K165.

The protein belongs to the short-chain dehydrogenases/reductases (SDR) family.

The protein operates within secondary metabolite biosynthesis. Its function is as follows. Short-chain dehydrogenase/reductase, part of the gene cluster that mediates the biosynthesis of melleolides, a range of antifungal and phytotoxic polyketide derivatives composed of an orsellinic acid (OA) moiety esterified to various sesquiterpene alcohols. The first step in melleolides biosynthesis is performed by the delta(6)-protoilludene synthase PRO1 which catalyzes the cyclization of farnesyl diphosphate to protoilludene. The orsellinic acid synthase armB produces OA by condensing acetyl-CoA with 3 malonyl-CoA units in a three-round chain elongation reaction folowed by a C2-C7 ring closure. ArmB further catalyzes the trans-esterification of OA to the various sesquiterpene alcohols resulting from the hydroxylation of protoilludene. The melleolides cluster also includes 5 cytochrome P450 monooxygenases, 4 NAD(+)-dependent oxidoreductases, one flavin-dependent oxidoreductase, and one O-methyltransferase. The cytochrome P450 monooxygenases may be involved in protoilludene hydroxylation to elaborate melleolides with multiple alcohol groups, such as melleolide D, which carries alcohol functionalities at C-4, C-5, C-10, and C-13. The role of the NAD(+)-dependent enzymes remains unknown. Numerous melleolides, including arnamial, show 5'-O-methylation of the aromatic moiety which may be catalyzed by the methyltransferase encoded in the cluster. The flavin-dependent oxidoreductase might represent the dehydrogenase yielding the aldehyde in position 1 of arnamial and other melleolides. Finally, several halogenase localized outside of the cluster, are able to catalyze the transfer of a single chlorine atom to the melleolide backbone, resulting in a 6'-chloromelleolide product. The sequence is that of Short-chain dehydrogenase/reductase ARMGADRAFT_1018421 from Armillaria gallica (Bulbous honey fungus).